The primary structure comprises 321 residues: Probable arabinan endo-1,5-alpha-L-arabinosidase C (321 aa).

The signal sequence occupies residues 1-20 (MYLYTLILLFLASVNVNAYA). The Proton acceptor role is filled by aspartate 33. Residues asparagine 75 and asparagine 192 are each glycosylated (N-linked (GlcNAc...) asparagine). Residue glutamate 200 is the Proton donor of the active site. N-linked (GlcNAc...) asparagine glycosylation is present at asparagine 224.

Belongs to the glycosyl hydrolase 43 family.

It localises to the secreted. The catalysed reaction is Endohydrolysis of (1-&gt;5)-alpha-arabinofuranosidic linkages in (1-&gt;5)-arabinans.. It participates in glycan metabolism; L-arabinan degradation. Its function is as follows. Endo-1,5-alpha-L-arabinanase involved in degradation of pectin. Its preferred substrate is linear 1,5-alpha-L-arabinan. This chain is Probable arabinan endo-1,5-alpha-L-arabinosidase C (abnC), found in Neosartorya fischeri (strain ATCC 1020 / DSM 3700 / CBS 544.65 / FGSC A1164 / JCM 1740 / NRRL 181 / WB 181) (Aspergillus fischerianus).